A 275-amino-acid chain; its full sequence is MGSCYSRKNKVSTISLDEEEKKKEKKKKKKIYILNGASGSGKDTQCRLLEKKYNYKIICISKLLKEYKEEYNKENVLNEEENYFDEIEKCMIDGSLVNDQIVIEIFHKQLNKYINDDKYNGIIINGFPRNYEQALLIIQNNISITKFINIQVGKDTLWTRINNRIIDPITNISYNENIIQIIKKKREGQELSDKEQKQLIIDNHLYNNLSNDILERLTKRKDDEEQVFNKRFQLYIESEQKINSLFKNICKNVDGEKSINDIFDQICSIIDDNPN.

Gly-2 carries N-myristoyl glycine lipidation. Residues 21–30 are required for cell membrane translocation but dispensable for cell membrane localization; it reads KKKEKKKKKK. Residue 39 to 44 coordinates ATP; sequence GSGKDT. The tract at residues 59–97 is NMP; sequence CISKLLKEYKEEYNKENVLNEEENYFDEIEKCMIDGSLV. Residues 95–97, 126–129, and Gln-133 contribute to the AMP site; these read SLV and GFPR. Arg-164 contacts ATP. The LID stretch occupies residues 165 to 214; the sequence is IIDPITNISYNENIIQIIKKKREGQELSDKEQKQLIIDNHLYNNLSNDIL. Arg-220 and Arg-231 together coordinate AMP.

The protein belongs to the adenylate kinase family. Monomer. Oligomer. Heterodimer composed of NMT and AK2; AK2 myristoylation stabilizes the complex. In terms of processing, myristoylation is required for cell membrane localization. Post-translationally, may be palmitoylated at Cys-4 which stabilizes cell membrane localization of the myristoylated protein.

It localises to the parasitophorous vacuole membrane. The catalysed reaction is AMP + ATP = 2 ADP. Functionally, catalyzes the reversible transfer of the terminal phosphate group between ATP and AMP. Has very low activity with CTP, GTP, ITP and UTP and no activity with GMP, UMP or IMP in vitro. This Plasmodium falciparum (isolate 3D7) protein is Adenylate kinase 2.